The sequence spans 554 residues: Propanediol dehydratase large subunit (554 aa).

This sequence belongs to the diol/glycerol dehydratase large subunit family. In terms of assembly, the propanediol dehydratase enzyme is a heterotrimeric complex composed of a large (PduC), a medium (PduD) and a small (PduE) subunit. Requires adenosylcob(III)alamin as cofactor.

The protein localises to the bacterial microcompartment. The catalysed reaction is propane-1,2-diol = propanal + H2O. The protein operates within polyol metabolism; 1,2-propanediol degradation. Functionally, part of the PduCDE complex that catalyzes the dehydration of 1,2-propanediol (1,2-PD) to propionaldehyde. This subunit is directly targeted to the bacterial microcompartment (BMC). Its function is as follows. Expression of a cosmid containing the full 21-gene pdu operon in E.coli allows E.coli to grow on 1,2-propanediol (1,2-PD) with the appearance of BMCs in its cytoplasm. The 1,2-PD-specific bacterial microcompartment (BMC) concentrates low levels of 1,2-PD catabolic enzymes, concentrates volatile reaction intermediates thus enhancing pathway flux and keeps the level of toxic, mutagenic propionaldehyde low. This chain is Propanediol dehydratase large subunit, found in Citrobacter freundii.